We begin with the raw amino-acid sequence, 143 residues long: Agaricus bisporus lectin (143 aa).

Beta-D-Gal-(1-&gt;3)-alpha-D-GalNAc-binding residues include Ala29, Ser48, Gly49, and Asn73. Residues Thr82, Arg103, and Tyr114 each coordinate N-acetyl-beta-D-glucosamine.

The protein belongs to the fungal fruit body lectin family. As to quaternary structure, homotetramer.

Its function is as follows. Lectin that recognizes O-linked galactose-beta-1,3-N-acetylgalactosamine, a disaccharide (Thomsen-Friedenreich antigen or T-disaccharide), present on cell surface glycoproteins. Can also bind galactose-beta-1,3-N-acetylglucosamine. Does not bind monosaccharides. Can be internalized by clathrin-coated vesicles after binding to surface glycoproteins. After internalization it inhibits nuclear import of nuclear localization signal dependent proteins. Inhibits proliferation of malignant cells without cytotoxicity for normal cells. This is Agaricus bisporus lectin from Agaricus bisporus (White button mushroom).